The following is a 202-amino-acid chain: Putative 3-methyladenine DNA glycosylase (202 aa).

Belongs to the DNA glycosylase MPG family.

This chain is Putative 3-methyladenine DNA glycosylase, found in Clostridioides difficile (strain 630) (Peptoclostridium difficile).